Here is a 270-residue protein sequence, read N- to C-terminus: Cell surface glycoprotein CD200 receptor 4 (270 aa).

An N-terminal signal peptide occupies residues 1–25 (MHALGRIPTLTLLIFINIFVSGSSC). The region spanning 26–145 (TDENQTIQND…GNLEKVYDLQ (120 aa)) is the Ig-like V-type domain. The Extracellular segment spans residues 26–241 (TDENQTIQND…TMTTPRSLLT (216 aa)). N-linked (GlcNAc...) asparagine glycosylation is found at asparagine 29 and asparagine 44. Disulfide bonds link cysteine 58/cysteine 129, cysteine 82/cysteine 97, cysteine 164/cysteine 213, and cysteine 183/cysteine 201. Residues 134–229 (PEGNLEKVYD…GNQSLSIELS (96 aa)) form the Ig-like C2-type domain. Asparagine 192 is a glycosylation site (N-linked (GlcNAc...) asparagine). The chain crosses the membrane as a helical span at residues 242-262 (ILYVKMALLVIILLNVGFAFF). Topologically, residues 263–270 (QKRNFART) are cytoplasmic.

This sequence belongs to the CD200R family. Interacts with TYROBP. Highly expressed in monocytes, NK cells and a subset of NKT cells. Weakly expressed in granulocytes and B-cells (at protein level). Expressed in brain, lung, testis, thymus, intestine and uterus. Expressed in bone marrow derived-macrophage and dendritic cells and mast cells.

The protein localises to the membrane. In terms of biological role, involved in the recruitment or surface expression of the TYROBP receptor. In Mus musculus (Mouse), this protein is Cell surface glycoprotein CD200 receptor 4 (Cd200r4).